A 272-amino-acid chain; its full sequence is METYAVFGNPIAHSKSPFIHQQFAQQLDIVHPYGRVLAPINNFINTLDAFFAAGGKGANITVPFKEEAFARSDELTERASLAGAVNTLKRLEDGRLLGDNTDGIGLLGDLERLNFIRPGLRILLIGAGGASRGVLLPLLSLDCAVTITNRTASRAEALAKIFAHTGSVHATDMDKLDGCEFDLIINATSSGIRGEIPAIPASLIHPSLCCYDMFYQKGNTPFLSWCVQQGAKRYADGLGMLVGQAAHAVLLWHGVLPQVEPVIEQLQQELLA.

Residues 14 to 16 (SKS) and Thr-61 contribute to the shikimate site. The Proton acceptor role is filled by Lys-65. An NADP(+)-binding site is contributed by Glu-77. Positions 86 and 102 each coordinate shikimate. NADP(+)-binding positions include 126–130 (GAGGA), 149–154 (NRTASR), and Met-213. Position 215 (Tyr-215) interacts with shikimate. An NADP(+)-binding site is contributed by Gly-237.

It belongs to the shikimate dehydrogenase family. In terms of assembly, homodimer.

The enzyme catalyses shikimate + NADP(+) = 3-dehydroshikimate + NADPH + H(+). It functions in the pathway metabolic intermediate biosynthesis; chorismate biosynthesis; chorismate from D-erythrose 4-phosphate and phosphoenolpyruvate: step 4/7. In terms of biological role, involved in the biosynthesis of the chorismate, which leads to the biosynthesis of aromatic amino acids. Catalyzes the reversible NADPH linked reduction of 3-dehydroshikimate (DHSA) to yield shikimate (SA). The chain is Shikimate dehydrogenase (NADP(+)) from Salmonella typhimurium (strain LT2 / SGSC1412 / ATCC 700720).